Reading from the N-terminus, the 75-residue chain is UPF0346 protein LEUM_0763 (75 aa).

Belongs to the UPF0346 family.

The chain is UPF0346 protein LEUM_0763 from Leuconostoc mesenteroides subsp. mesenteroides (strain ATCC 8293 / DSM 20343 / BCRC 11652 / CCM 1803 / JCM 6124 / NCDO 523 / NBRC 100496 / NCIMB 8023 / NCTC 12954 / NRRL B-1118 / 37Y).